The chain runs to 155 residues: Gas vesicle protein K (155 aa).

This sequence belongs to the gas vesicle GvpK family.

Its subcellular location is the gas vesicle. Functionally, might be involved in nucleating gas vesicle formation. Gas vesicles (GV) are hollow, gas filled proteinaceous nanostructures. During planktonic growth they allow positioning of the organism at a favorable depth for light or nutrient acquisition. In Dolichospermum flosaquae (Anabaena flos-aquae), this protein is Gas vesicle protein K.